The following is a 197-amino-acid chain: Nucleoid occlusion factor SlmA (197 aa).

In terms of domain architecture, HTH tetR-type spans 7–67 (INRREHILQC…GLIEFIEESL (61 aa)). Positions 30-49 (TTAKLAAEVGVSEAALYRHF) form a DNA-binding region, H-T-H motif. Residues 109–136 (DALLGENERLRSRISQLFSKIETHLKQI) adopt a coiled-coil conformation.

Belongs to the nucleoid occlusion factor SlmA family. As to quaternary structure, homodimer. Interacts with FtsZ.

It is found in the cytoplasm. The protein localises to the nucleoid. In terms of biological role, required for nucleoid occlusion (NO) phenomenon, which prevents Z-ring formation and cell division over the nucleoid. Acts as a DNA-associated cell division inhibitor that binds simultaneously chromosomal DNA and FtsZ, and disrupts the assembly of FtsZ polymers. SlmA-DNA-binding sequences (SBS) are dispersed on non-Ter regions of the chromosome, preventing FtsZ polymerization at these regions. This is Nucleoid occlusion factor SlmA from Shewanella pealeana (strain ATCC 700345 / ANG-SQ1).